Reading from the N-terminus, the 555-residue chain is Urocanate hydratase (555 aa).

NAD(+) contacts are provided by residues 53–54, Gln131, 177–179, Glu197, Arg202, 243–244, 264–268, 274–275, and Tyr323; these read GG, GMG, NA, QTSAH, and YL. The active site involves Cys411. Gly493 contributes to the NAD(+) binding site.

The protein belongs to the urocanase family. The cofactor is NAD(+).

The protein resides in the cytoplasm. The enzyme catalyses 4-imidazolone-5-propanoate = trans-urocanate + H2O. It functions in the pathway amino-acid degradation; L-histidine degradation into L-glutamate; N-formimidoyl-L-glutamate from L-histidine: step 2/3. Its function is as follows. Catalyzes the conversion of urocanate to 4-imidazolone-5-propionate. The protein is Urocanate hydratase of Maricaulis maris (strain MCS10) (Caulobacter maris).